The primary structure comprises 180 residues: NADH-ubiquinone oxidoreductase chain 5 (180 aa).

A helical membrane pass occupies residues 131–148 (VYHYAFAMLLGSTPFVTF).

It belongs to the complex I subunit 5 family.

The protein localises to the mitochondrion inner membrane. It carries out the reaction a ubiquinone + NADH + 5 H(+)(in) = a ubiquinol + NAD(+) + 4 H(+)(out). In terms of biological role, core subunit of the mitochondrial membrane respiratory chain NADH dehydrogenase (Complex I) that is believed to belong to the minimal assembly required for catalysis. Complex I functions in the transfer of electrons from NADH to the respiratory chain. The immediate electron acceptor for the enzyme is believed to be ubiquinone. The protein is NADH-ubiquinone oxidoreductase chain 5 (ND5) of Zea mays (Maize).